A 350-amino-acid chain; its full sequence is N-acetyl-gamma-glutamyl-phosphate reductase (350 aa).

The active site involves C154.

It belongs to the NAGSA dehydrogenase family. Type 1 subfamily.

It localises to the cytoplasm. It catalyses the reaction N-acetyl-L-glutamate 5-semialdehyde + phosphate + NADP(+) = N-acetyl-L-glutamyl 5-phosphate + NADPH + H(+). It functions in the pathway amino-acid biosynthesis; L-arginine biosynthesis; N(2)-acetyl-L-ornithine from L-glutamate: step 3/4. Its function is as follows. Catalyzes the NADPH-dependent reduction of N-acetyl-5-glutamyl phosphate to yield N-acetyl-L-glutamate 5-semialdehyde. The chain is N-acetyl-gamma-glutamyl-phosphate reductase from Corynebacterium efficiens (strain DSM 44549 / YS-314 / AJ 12310 / JCM 11189 / NBRC 100395).